The primary structure comprises 383 residues: MMKVLIAGGGTGGHLFPGIALAEEVVTRHHRNEVVFVGTERGIESRVVPKEGYPLELVKVQGLKGKGFLSLLKALFALPLAFIESFRILARQKPDVVVGVGGYASGPVVMAAWLMGIPTAIQEQNALPGFTNKVLGRIVRVVFIAFEEARAFFPEKKVQLIGNPIRRKLMDNYLRSHVAHERFSVLVFGGSLGARGINQRMTEALDSLGDLKDSLHFVHQTGKNDLESVRKGYADKGFQAEVVEFIDDMSSAYARADLVVCRAGATTLAELTVCKKASILIPFPHATDDHQAVNARALVDAGAALMFRESELTGEKLAQTVRELKSHPERLKSMEKKAGLLGRPEAAKELADVCVDLMVQTWGPNGRERTPIEAEKKAPRSNS.

UDP-N-acetyl-alpha-D-glucosamine-binding positions include 11 to 13 (TGG), Asn-125, Arg-166, Ser-191, Ile-246, and Gln-291. The segment at 364–383 (PNGRERTPIEAEKKAPRSNS) is disordered. The segment covering 366–383 (GRERTPIEAEKKAPRSNS) has biased composition (basic and acidic residues).

This sequence belongs to the glycosyltransferase 28 family. MurG subfamily.

The protein resides in the cell inner membrane. The catalysed reaction is di-trans,octa-cis-undecaprenyl diphospho-N-acetyl-alpha-D-muramoyl-L-alanyl-D-glutamyl-meso-2,6-diaminopimeloyl-D-alanyl-D-alanine + UDP-N-acetyl-alpha-D-glucosamine = di-trans,octa-cis-undecaprenyl diphospho-[N-acetyl-alpha-D-glucosaminyl-(1-&gt;4)]-N-acetyl-alpha-D-muramoyl-L-alanyl-D-glutamyl-meso-2,6-diaminopimeloyl-D-alanyl-D-alanine + UDP + H(+). The protein operates within cell wall biogenesis; peptidoglycan biosynthesis. Its function is as follows. Cell wall formation. Catalyzes the transfer of a GlcNAc subunit on undecaprenyl-pyrophosphoryl-MurNAc-pentapeptide (lipid intermediate I) to form undecaprenyl-pyrophosphoryl-MurNAc-(pentapeptide)GlcNAc (lipid intermediate II). The sequence is that of UDP-N-acetylglucosamine--N-acetylmuramyl-(pentapeptide) pyrophosphoryl-undecaprenol N-acetylglucosamine transferase from Myxococcus xanthus (strain DK1622).